Reading from the N-terminus, the 217-residue chain is Putative peroxiredoxin Q, chloroplastic (217 aa).

The N-terminal 66 residues, 1-66, are a transit peptide targeting the chloroplast; sequence MAFAVSTACR…PSTTGRNRIV (66 aa). The Thioredoxin domain maps to 70-217; the sequence is VSKGSAAPNF…GETLKILQSL (148 aa). Residue cysteine 112 is the Cysteine sulfenic acid (-SOH) intermediate of the active site. Cysteine 112 and cysteine 117 are joined by a disulfide.

Belongs to the peroxiredoxin family. BCP/PrxQ subfamily. In terms of assembly, monomer.

It is found in the plastid. Its subcellular location is the chloroplast thylakoid lumen. The enzyme catalyses a hydroperoxide + [thioredoxin]-dithiol = an alcohol + [thioredoxin]-disulfide + H2O. Its function is as follows. Thiol-specific peroxidase that catalyzes the reduction of hydrogen peroxide and organic hydroperoxides to water and alcohols, respectively. Plays a role in cell protection against oxidative stress by detoxifying peroxides. In Oryza sativa subsp. indica (Rice), this protein is Putative peroxiredoxin Q, chloroplastic.